The following is a 353-amino-acid chain: uncharacterized protein (353 aa).

The signal sequence occupies residues 1–20 (MLMRSVCFILLAVLLFSLSA). The N-palmitoyl cysteine moiety is linked to residue C21. C21 carries S-diacylglycerol cysteine lipidation.

Its subcellular location is the cell membrane. This is an uncharacterized protein from Bacillus subtilis (strain 168).